The chain runs to 791 residues: KN motif and ankyrin repeat domain-containing protein 3 (791 aa).

5 disordered regions span residues 1 to 37, 56 to 181, 254 to 312, 401 to 425, and 463 to 514; these read MAKFVLNQNLPDLGGPPLYPGPTGSARSPSSPYSVET, RGPA…GPAQ, ATSD…ETRE, GCTEKTTQTELPVENQPRPTAGDEM, and YESS…GDCE. Residues 25 to 34 are compositionally biased toward polar residues; it reads SARSPSSPYS. Over residues 105–125 the composition is skewed to low complexity; sequence LSPGAFPGLSLPPLSPRSLSR. Residues 127 to 149 show a composition bias toward basic and acidic residues; sequence PRVEHTLLETSRRLEQAQARERA. Phosphoserine is present on residues S151, S159, S163, S166, S167, and S176. A compositionally biased stretch (low complexity) spans 158 to 180; sequence RSPRGSGRSSPAPNPALASPGPA. A coiled-coil region spans residues 180-229; it reads AQLQLVREQMAAALRRLRELEDQARALPELQEQVRALRAEKARLLAGRVQ. Basic and acidic residues-rich tracts occupy residues 254–280 and 293–312; these read ATSDRGVRSRASPRAEDPDGLAARRSE and PDGEPRTRETGTEVVPETRE. Residue S279 is modified to Phosphoserine. Over residues 401–410 the composition is skewed to polar residues; it reads GCTEKTTQTE. Over residues 485 to 496 the composition is skewed to low complexity; sequence SSSSGSDDSSGG. A compositionally biased stretch (basic and acidic residues) spans 505-514; the sequence is HNDKDAGDCE. 5 ANK repeats span residues 606-636, 640-677, 679-708, 712-742, and 746-775; these read NGNTALHYSVSHGNLAISSLLLDTGVCDVNH, AGYSALMLAALTSVGQEEEDMAVAQRLFSMGDVNAKAS, TGQTALMLAISHGHQDMVAALLECGADVNV, DGATALMCASEYGRLDTVQLLLAQPGCDLTI, and EGTSALAIALEAEQDEVAALLHAHLTSNHQ. Polar residues predominate over residues 772–783; that stretch reads SNHQGQSSTGSP. The segment at 772–791 is disordered; it reads SNHQGQSSTGSPTAKECNDK.

Functionally, may be involved in the control of cytoskeleton formation by regulating actin polymerization. The polypeptide is KN motif and ankyrin repeat domain-containing protein 3 (Mus musculus (Mouse)).